The following is a 386-amino-acid chain: 8-amino-7-oxononanoate synthase (386 aa).

Arg23 is a substrate binding site. 110 to 111 (GY) lines the pyridoxal 5'-phosphate pocket. His135 contributes to the substrate binding site. Pyridoxal 5'-phosphate is bound by residues Ser181, His209, and Thr236. At Lys239 the chain carries N6-(pyridoxal phosphate)lysine. Thr354 provides a ligand contact to substrate.

This sequence belongs to the class-II pyridoxal-phosphate-dependent aminotransferase family. BioF subfamily. In terms of assembly, homodimer. Pyridoxal 5'-phosphate serves as cofactor.

The catalysed reaction is 6-carboxyhexanoyl-[ACP] + L-alanine + H(+) = (8S)-8-amino-7-oxononanoate + holo-[ACP] + CO2. It functions in the pathway cofactor biosynthesis; biotin biosynthesis. Catalyzes the decarboxylative condensation of pimeloyl-[acyl-carrier protein] and L-alanine to produce 8-amino-7-oxononanoate (AON), [acyl-carrier protein], and carbon dioxide. This is 8-amino-7-oxononanoate synthase from Thiobacillus denitrificans (strain ATCC 25259 / T1).